We begin with the raw amino-acid sequence, 292 residues long: Putative gonadotropin-releasing hormone II receptor (292 aa).

At 1–28 the chain is on the extracellular side; it reads MSAGNGTPWDATWNITVQWLAVDIACRT. Residues cysteine 26 and cysteine 101 are joined by a disulfide bond. A helical membrane pass occupies residues 29 to 49; it reads LMFLKLMATYSAAFLPVVIGL. Topologically, residues 50–67 are cytoplasmic; it reads DRQAAVLNPLGSRSGVRK. A helical membrane pass occupies residues 68 to 88; sequence LLGAAWGLSFLLAFPQLFLFH. At 89–115 the chain is on the extracellular side; sequence TVHCAGPVPFTQCVTKGSFKAQWQETT. A helical membrane pass occupies residues 116–136; it reads YNLFTFCCLFLLPLTAMAICY. The Cytoplasmic segment spans residues 137-177; that stretch reads SRIVLSVSRPQTRKGSHAPAGEFALPRSFDNCPRVRLRALR. The helical transmembrane segment at 178-198 threads the bilayer; the sequence is LALLILLTFILCWTPYYLLGM. At 199–216 the chain is on the extracellular side; sequence WYWFSPTMLTEVPPSLSH. The helical transmembrane segment at 217–237 threads the bilayer; sequence ILFLLGLLNAPLDPLLYGAFT. Residues 238 to 292 lie on the Cytoplasmic side of the membrane; it reads LGCRRGHQELSIDSSKEGSGRMLQEEIHAFRQLEVQKTVTSRRAGETKGISITSI.

The protein belongs to the G-protein coupled receptor 1 family. Post-translationally, phosphorylated on the C-terminal cytoplasmic tail. Expressed in many tissues.

The protein localises to the cell membrane. In terms of biological role, putative receptor for gonadotropin releasing hormone II (GnRH II) which is most probably non-functional. This is Putative gonadotropin-releasing hormone II receptor (GNRHR2) from Homo sapiens (Human).